A 930-amino-acid chain; its full sequence is Isoleucine--tRNA ligase (930 aa).

Positions 57-67 (PYANGNIHVGH) match the 'HIGH' region motif. An L-isoleucyl-5'-AMP-binding site is contributed by glutamate 554. A 'KMSKS' region motif is present at residues 595–599 (KMSKS). Lysine 598 serves as a coordination point for ATP. Zn(2+)-binding residues include cysteine 888, cysteine 891, cysteine 908, and cysteine 911.

Belongs to the class-I aminoacyl-tRNA synthetase family. IleS type 1 subfamily. In terms of assembly, monomer. Requires Zn(2+) as cofactor.

It localises to the cytoplasm. The enzyme catalyses tRNA(Ile) + L-isoleucine + ATP = L-isoleucyl-tRNA(Ile) + AMP + diphosphate. In terms of biological role, catalyzes the attachment of isoleucine to tRNA(Ile). As IleRS can inadvertently accommodate and process structurally similar amino acids such as valine, to avoid such errors it has two additional distinct tRNA(Ile)-dependent editing activities. One activity is designated as 'pretransfer' editing and involves the hydrolysis of activated Val-AMP. The other activity is designated 'posttransfer' editing and involves deacylation of mischarged Val-tRNA(Ile). This chain is Isoleucine--tRNA ligase, found in Streptococcus gordonii (strain Challis / ATCC 35105 / BCRC 15272 / CH1 / DL1 / V288).